The following is a 328-amino-acid chain: Hydrogenase-2 operon protein HybA (328 aa).

Positions Met-1 to Ala-27 are cleaved as a signal peptide. 3 4Fe-4S ferredoxin-type domains span residues Leu-38–Gln-68, Asn-103–Lys-134, and Gly-136–Asn-165. [4Fe-4S] cluster contacts are provided by Cys-47, Cys-50, Cys-53, Cys-57, Cys-112, Cys-115, Cys-120, Cys-124, Cys-145, Cys-148, Cys-151, Cys-155, Cys-174, Cys-177, Cys-193, and Cys-197.

Requires [4Fe-4S] cluster as cofactor.

It localises to the periplasm. Participates in the periplasmic electron-transferring activity of hydrogenase 2 during its catalytic turnover. The protein is Hydrogenase-2 operon protein HybA (hybA) of Escherichia coli O157:H7.